A 1068-amino-acid polypeptide reads, in one-letter code: Cytospin-B (1068 aa).

A disordered region spans residues 1–221 (MRSAAKPWNP…VDGTSVSPGD (221 aa)). A lipid anchor (N-myristoyl glycine) is attached at arginine 2. The span at 29–40 (SSGMKSSKSSTS) shows a compositional bias: low complexity. Residues serine 38 and serine 55 each carry the phosphoserine modification. Threonine 78 bears the Phosphothreonine mark. Residues serine 112, serine 131, serine 134, serine 137, and serine 138 each carry the phosphoserine modification. Residues 126–144 (SNPRKSVSSPTSSNTPTPT) are compositionally biased toward low complexity. A Phosphothreonine modification is found at threonine 142. The span at 154 to 200 (PKQENEGGEKAALESQVRELLAEAKAKDSEINRLRSELKKYKEKRTL) shows a compositional bias: basic and acidic residues. A phosphoserine mark is found at serine 218 and serine 241. 3 stretches are compositionally biased toward polar residues: residues 261–295 (PNSE…QMSS), 309–323 (LRTS…TKAS), and 337–367 (ETPS…SVSE). Positions 261–367 (PNSEGAASHT…AGSSPNSVSE (107 aa)) are disordered. A phosphoserine mark is found at serine 361, serine 366, serine 369, and serine 425. Residues 579–773 (EVQEMLKVAR…QKELGDVQGH (195 aa)) are a coiled coil. Residues 777 to 796 (VTSRAAPPPVDEEPESSEVD) form a disordered region. Phosphoserine is present on residues serine 847 and serine 863. Disordered regions lie at residues 859–885 (AAAV…TQRL) and 898–922 (GRTE…SRPP). Over residues 866–875 (QRHSTYSSVR) the composition is skewed to polar residues. The segment covering 898 to 909 (GRTETLKPDPHL) has biased composition (basic and acidic residues). Residues serine 912 and serine 914 each carry the phosphoserine modification. The span at 912 to 922 (SPSLESLSRPP) shows a compositional bias: low complexity. The region spanning 962-1067 (GSKRNALLKW…YVAQIYKYFE (106 aa)) is the Calponin-homology (CH) domain.

This sequence belongs to the cytospin-A family. As to expression, highly expressed in testis. Barely detectable in other tissues. Also highly expressed in some cancer cell lines.

It localises to the nucleus. It is found in the membrane. The chain is Cytospin-B (SPECC1) from Homo sapiens (Human).